Here is a 609-residue protein sequence, read N- to C-terminus: Aminopeptidase ltah-1.1 (609 aa).

Residues 137 to 139 (QCQ) and 268 to 273 (PFGGME) contribute to the substrate site. His-297 serves as a coordination point for Zn(2+). The Proton acceptor role is filled by Glu-298. Positions 301 and 320 each coordinate Zn(2+). Tyr-387 acts as the Proton donor in catalysis. Substrate is bound at residue 564 to 566 (RMK).

The protein belongs to the peptidase M1 family. The cofactor is Zn(2+).

It is found in the cytoplasm. The enzyme catalyses Release of N-terminal Arg and Lys from oligopeptides when P1' is not Pro. Also acts on arylamides of Arg and Lys.. In terms of biological role, aminopeptidase which preferentially removes N-terminal Arg and Lys residues from peptides and proteins. The polypeptide is Aminopeptidase ltah-1.1 (Caenorhabditis elegans).